Here is a 172-residue protein sequence, read N- to C-terminus: Stellate protein CG33236/CG33240/CG33244/CG33245 (172 aa).

This sequence belongs to the casein kinase 2 subunit beta family. Interacts in vitro with the casein kinase 2 alpha subunit (CkII-alpha). The relevance of such interaction is however unclear in vivo. Probably not expressed in wild-type flies. In males lacking the Y chromosome, it is testis-specific and constitutes the main component of star-shaped crystals.

In terms of biological role, unknown. In males lacking the Y chromosome, its strong overexpression leads to the appearance of proteinaceous star-shaped crystals in the primary spermatocytes causing meiotic drive, possibly by interfering with normal casein kinase 2 activity. This is Stellate protein CG33236/CG33240/CG33244/CG33245 (Ste:CG33236) from Drosophila melanogaster (Fruit fly).